A 397-amino-acid chain; its full sequence is LL-diaminopimelate aminotransferase (397 aa).

Substrate is bound by residues Tyr-14 and Gly-41. Pyridoxal 5'-phosphate-binding positions include Tyr-71, Ala-104–Lys-105, Tyr-128, Asn-174, Tyr-205, and Ser-233–Ser-235. Residues Lys-105, Tyr-128, and Asn-174 each coordinate substrate. Lys-236 carries the N6-(pyridoxal phosphate)lysine modification. Pyridoxal 5'-phosphate-binding residues include Arg-244 and Asn-275. Substrate contacts are provided by Asn-275 and Arg-368.

The protein belongs to the class-I pyridoxal-phosphate-dependent aminotransferase family. LL-diaminopimelate aminotransferase subfamily. As to quaternary structure, homodimer. Pyridoxal 5'-phosphate serves as cofactor.

The catalysed reaction is (2S,6S)-2,6-diaminopimelate + 2-oxoglutarate = (S)-2,3,4,5-tetrahydrodipicolinate + L-glutamate + H2O + H(+). Its pathway is amino-acid biosynthesis; L-lysine biosynthesis via DAP pathway; LL-2,6-diaminopimelate from (S)-tetrahydrodipicolinate (aminotransferase route): step 1/1. Involved in the synthesis of meso-diaminopimelate (m-DAP or DL-DAP), required for both lysine and peptidoglycan biosynthesis. Catalyzes the direct conversion of tetrahydrodipicolinate to LL-diaminopimelate. This Chlamydia pneumoniae (Chlamydophila pneumoniae) protein is LL-diaminopimelate aminotransferase.